The following is a 193-amino-acid chain: DNA dC-&gt;dU-editing enzyme APOBEC-3H (193 aa).

The CMP/dCMP-type deaminase domain maps to 24–126 (YRRKTYLCYQ…WKYQQGLRHL (103 aa)). A Zn(2+)-binding site is contributed by His54. The active-site Proton donor is the Glu56. Cys85 and Cys88 together coordinate Zn(2+).

This sequence belongs to the cytidine and deoxycytidylate deaminase family. Homodimer. The cofactor is Zn(2+). In terms of tissue distribution, expressed in peripheral blood mononuclear cells.

The protein resides in the cytoplasm. It carries out the reaction a 2'-deoxycytidine in single-stranded DNA + H2O + H(+) = a 2'-deoxyuridine in single-stranded DNA + NH4(+). DNA deaminase (cytidine deaminase) which acts as an inhibitor of retrovirus replication and retrotransposon mobility via deaminase-dependent and -independent mechanisms. Selectively targets single-stranded DNA and does not deaminate double-stranded DNA or single- or double-stranded RNA. Exhibits single-stranded DNA deaminase activity (in vitro). Incorporates into the released virions of the virion infectivity factor (vif)-deficient feline immunodeficiency virus (FIV) and suppresses FIV infectivity, probably in a deaminase-dependent manner (in vitro). Induces G-to-A hypermutations in vif-deficient FIV (in vitro). The APOBEC3H/APOBEC3Z3 haplotype 5 exhibits antiviral activity against vif-proficient FIV, strains Petaluma, C36 and Shizuoka (in vitro). Does not exhibit inhibitory activity against feline leukemia virus (FeLV), feline endogenous retrovirus (RD-114 virus) or a long interspersed nuclear element-1 (LINE-1) retrotransposon (in vitro). The chain is DNA dC-&gt;dU-editing enzyme APOBEC-3H from Felis catus (Cat).